A 73-amino-acid chain; its full sequence is Large ribosomal subunit protein bL28 (73 aa).

This sequence belongs to the bacterial ribosomal protein bL28 family.

The polypeptide is Large ribosomal subunit protein bL28 (Anaeromyxobacter dehalogenans (strain 2CP-1 / ATCC BAA-258)).